Reading from the N-terminus, the 390-residue chain is 2-deoxy-scyllo-inosose synthase (390 aa).

NAD(+)-binding positions include D42, 73–76 (EQNK), 105–109 (GVTGN), 129–130 (TT), 140–142 (SLK), and 151–152 (KN). Residue K142 is part of the active site. E184 lines the Co(2+) pocket. The active site involves E244. The Co(2+) site is built by H247 and H263. The segment at 371-390 (PPRPAAARTDDAATVLGGAG) is disordered.

The protein belongs to the sugar phosphate cyclases superfamily. DOI synthase family. The cofactor is NAD(+). Co(2+) is required as a cofactor.

It catalyses the reaction D-glucose 6-phosphate = 2-deoxy-L-scyllo-inosose + phosphate. It participates in metabolic intermediate biosynthesis; 2-deoxystreptamine biosynthesis; 2-deoxystreptamine from D-glucose 6-phosphate: step 1/4. The protein operates within antibiotic biosynthesis; kanamycin biosynthesis. In terms of biological role, catalyzes the intramolecular carbocycle formation from D-glucose-6-phosphate to 2-deoxy-scyllo-inosose (DOI). This chain is 2-deoxy-scyllo-inosose synthase (kanC), found in Streptomyces kanamyceticus.